Reading from the N-terminus, the 573-residue chain is Anti-Muellerian hormone type-2 receptor (573 aa).

Positions 1–17 (MLGSLGLWALLPTAVEA) are cleaved as a signal peptide. Residues 18–149 (PPNRRTCVFF…APGESIWMAL (132 aa)) lie on the Extracellular side of the membrane. 2 disulfides stabilise this stretch: Cys55/Cys79 and Cys92/Cys109. N-linked (GlcNAc...) asparagine glycosylation occurs at Asn66. Residue Asn119 is glycosylated (N-linked (GlcNAc...) asparagine). The chain crosses the membrane as a helical span at residues 150–170 (VLLGLFLLLLLLLGSIILALL). Residues 171-573 (QRKNYRVRGE…PQPACTLSPV (403 aa)) lie on the Cytoplasmic side of the membrane. Residues 203–518 (LCFSQVIREG…AHPQESHPFP (316 aa)) enclose the Protein kinase domain. ATP contacts are provided by residues 209–217 (IREGGHAVV) and Lys230. The active-site Proton acceptor is Asp333.

Belongs to the protein kinase superfamily. TKL Ser/Thr protein kinase family. TGFB receptor subfamily. As to quaternary structure, interacts with type I receptor ACVR1. Requires Mg(2+) as cofactor. The cofactor is Mn(2+).

Its subcellular location is the membrane. The enzyme catalyses L-threonyl-[receptor-protein] + ATP = O-phospho-L-threonyl-[receptor-protein] + ADP + H(+). It carries out the reaction L-seryl-[receptor-protein] + ATP = O-phospho-L-seryl-[receptor-protein] + ADP + H(+). Functionally, on ligand binding, forms a receptor complex consisting of two type II and two type I transmembrane serine/threonine kinases. Type II receptors phosphorylate and activate type I receptors which autophosphorylate, then bind and activate SMAD transcriptional regulators. Receptor for anti-Muellerian hormone. The sequence is that of Anti-Muellerian hormone type-2 receptor (AMHR2) from Homo sapiens (Human).